The following is a 490-amino-acid chain: Ribulose bisphosphate carboxylase large chain (490 aa).

Residues Asn-127 and Thr-177 each coordinate substrate. The Proton acceptor role is filled by Lys-179. Position 181 (Lys-181) interacts with substrate. The Mg(2+) site is built by Lys-205, Asp-207, and Glu-208. Residue Lys-205 is modified to N6-carboxylysine. His-297 serves as the catalytic Proton acceptor. Arg-298, His-330, and Ser-382 together coordinate substrate.

This sequence belongs to the RuBisCO large chain family. Type I subfamily. In terms of assembly, heterohexadecamer of 8 large chains and 8 small chains. The cofactor is Mg(2+).

It localises to the plastid. It is found in the chloroplast. The enzyme catalyses 2 (2R)-3-phosphoglycerate + 2 H(+) = D-ribulose 1,5-bisphosphate + CO2 + H2O. It carries out the reaction D-ribulose 1,5-bisphosphate + O2 = 2-phosphoglycolate + (2R)-3-phosphoglycerate + 2 H(+). Its function is as follows. RuBisCO catalyzes two reactions: the carboxylation of D-ribulose 1,5-bisphosphate, the primary event in carbon dioxide fixation, as well as the oxidative fragmentation of the pentose substrate in the photorespiration process. Both reactions occur simultaneously and in competition at the same active site. This Thalassiosira nordenskioeldii (Marine diatom) protein is Ribulose bisphosphate carboxylase large chain.